The primary structure comprises 99 residues: Beta-defensin 127 (99 aa).

The first 20 residues, 1-20, serve as a signal peptide directing secretion; sequence MGLFMIIAILLFQKPTVTEQ. 3 disulfides stabilise this stretch: Cys-24-Cys-53, Cys-33-Cys-47, and Cys-37-Cys-54. The propeptide occupies 66 to 99; sequence ITKPPRPKPATLALTLQDYVTIIENFPSLKTQST.

Belongs to the beta-defensin family.

It is found in the secreted. Functionally, has antibacterial activity. The chain is Beta-defensin 127 (DEFB127) from Homo sapiens (Human).